We begin with the raw amino-acid sequence, 101 residues long: Integration host factor subunit beta (101 aa).

Residues 57-76 (PARAGRNPRTGEHVPVDQKS) form a disordered region.

It belongs to the bacterial histone-like protein family. In terms of assembly, heterodimer of an alpha and a beta chain.

This protein is one of the two subunits of integration host factor, a specific DNA-binding protein that functions in genetic recombination as well as in transcriptional and translational control. The chain is Integration host factor subunit beta from Nitrobacter winogradskyi (strain ATCC 25391 / DSM 10237 / CIP 104748 / NCIMB 11846 / Nb-255).